The sequence spans 93 residues: SH3 domain-binding glutamic acid-rich-like protein 3 (93 aa).

Residue Ser-2 is modified to N-acetylserine. The Glutaredoxin domain maps to Ser-2–Ala-93. Residue Thr-9 is glycosylated (O-linked (GalNAc...) threonine).

Belongs to the SH3BGR family. As to quaternary structure, interacts with MYO1C (via its IQ motifs); the interaction is dependent on calcium and takes place at membrane ruffles. May be glycosylated. Expressed in heart, liver, lung, kidney, spleen, thymus, ovarian follicles, skeletal muscle, brain, lymph node and mammary epithelial and stromal cells (at protein level).

It is found in the cytoplasm. The protein localises to the cytosol. It localises to the cell projection. Its subcellular location is the ruffle membrane. The protein resides in the nucleus. Its function is as follows. Could act as a modulator of glutaredoxin biological activity. May play a role in cytoskeleton organization. This Rattus norvegicus (Rat) protein is SH3 domain-binding glutamic acid-rich-like protein 3.